A 289-amino-acid chain; its full sequence is Homeobox protein Nkx-2.6 (289 aa).

Disordered regions lie at residues 75 to 125 (GSNP…PQRK) and 259 to 289 (TPLA…VTAW). The homeobox DNA-binding region spans 123–182 (QRKSRVLFSQAQVLALERRFKQQRYLTAPEREHLASALQLTSTQVKIWFQNRRYKSKSQR). Positions 261–274 (LASSGFSPGGQSAA) are enriched in polar residues.

Belongs to the NK-2 homeobox family. As to expression, not detected in any neonate or adult tissues.

It localises to the nucleus. Acts as a transcriptional activator. In conjunction with NKX2-5, may play a role in both pharyngeal and cardiac embryonic development. This chain is Homeobox protein Nkx-2.6 (Nkx2-6), found in Mus musculus (Mouse).